Here is an 869-residue protein sequence, read N- to C-terminus: Iron-sulfur cluster assembly SufBD family protein ML0593 (869 aa).

In terms of domain architecture, DOD-type homing endonuclease spans Leu344 to Leu477.

It belongs to the iron-sulfur cluster assembly SufBD family. This protein undergoes a protein self splicing that involves a post-translational excision of the intervening region (intein) followed by peptide ligation.

In Mycobacterium leprae (strain TN), this protein is Iron-sulfur cluster assembly SufBD family protein ML0593.